A 293-amino-acid polypeptide reads, in one-letter code: MTQAPVTAGTPYGTIPPASPLPQRRPVSLPRLAQMREAGEKITMVTAYDATFAAVADAAGVECILVGDSLGMVCQGLHSTVGVSLQDMCYHTASVARGLHRVQGTAWLIADMPYGSYAESREQAMRSACELMQAGAHMVKLEGGGWTAPTVQFLVERGVPVCAHLGLTPQTVHALGGYRVQGKSDEGAATLRRHALELQDAGASMLVLEMVPAQLSRELTAELPHCHTIGIGAGSGTAGQVLVLHDMLGVNLGKMARFVHNFMADAGSVKGAFEAYVHAVKNGSFPDDSKHAW.

A disordered region spans residues 1-26; it reads MTQAPVTAGTPYGTIPPASPLPQRRP. 2 residues coordinate Mg(2+): Asp68 and Asp111. 3-methyl-2-oxobutanoate-binding positions include 68–69, Asp111, and Lys140; that span reads DS. Residue Glu142 coordinates Mg(2+). The active-site Proton acceptor is the Glu209.

It belongs to the PanB family. As to quaternary structure, homodecamer; pentamer of dimers. Mg(2+) serves as cofactor.

The protein localises to the cytoplasm. It carries out the reaction 3-methyl-2-oxobutanoate + (6R)-5,10-methylene-5,6,7,8-tetrahydrofolate + H2O = 2-dehydropantoate + (6S)-5,6,7,8-tetrahydrofolate. Its pathway is cofactor biosynthesis; (R)-pantothenate biosynthesis; (R)-pantoate from 3-methyl-2-oxobutanoate: step 1/2. Its function is as follows. Catalyzes the reversible reaction in which hydroxymethyl group from 5,10-methylenetetrahydrofolate is transferred onto alpha-ketoisovalerate to form ketopantoate. The protein is 3-methyl-2-oxobutanoate hydroxymethyltransferase of Delftia acidovorans (strain DSM 14801 / SPH-1).